A 519-amino-acid polypeptide reads, in one-letter code: Spermatocyte protein spe-8 (519 aa).

Disordered stretches follow at residues 1-39 (MSGV…NPNV) and 73-97 (NNLK…KQRD). The span at 73–84 (NNLKKSASFDSK) shows a compositional bias: polar residues. Residues 85 to 97 (NQPEDSKTPKQRD) show a composition bias toward basic and acidic residues. An SH2 domain is found at 119 to 208 (FYHGFMGRTE…PFYDNMTLIC (90 aa)). ATP contacts are provided by residues 146–154 (VGRRVAYVI) and Lys-184. In terms of domain architecture, Protein kinase spans 209–490 (GLARHEWQLN…KEEAGMHELD (282 aa)). The active-site Proton acceptor is Asp-349.

The protein belongs to the protein kinase superfamily. Tyr protein kinase family. Fes/fps subfamily. As to expression, expressed in hermaphrodite larvae but not in adult. Expressed in both male larvae and adult.

It localises to the cell membrane. The protein resides in the cytoplasm. The enzyme catalyses L-tyrosyl-[protein] + ATP = O-phospho-L-tyrosyl-[protein] + ADP + H(+). Its function is as follows. Probable non-receptor tyrosine-protein kinase which plays a role in spermatid activation (spermiogenesis) in hermaphrodites. The protein is Spermatocyte protein spe-8 of Caenorhabditis briggsae.